The chain runs to 156 residues: Small ribosomal subunit protein uS7c (156 aa).

Belongs to the universal ribosomal protein uS7 family. As to quaternary structure, part of the 30S ribosomal subunit.

It localises to the plastid. The protein localises to the chloroplast. One of the primary rRNA binding proteins, it binds directly to 16S rRNA where it nucleates assembly of the head domain of the 30S subunit. The polypeptide is Small ribosomal subunit protein uS7c (rps7) (Porphyra purpurea (Red seaweed)).